Here is a 137-residue protein sequence, read N- to C-terminus: Protein LTO1 homolog (137 aa).

A2 carries the N-acetylalanine modification. The tract at residues 22-58 (GYQEGYEEGSSLGIVEGKRYGMVHGAKIGSEIGCYRG) is deca-GX3 motif; required for interaction with YAE1 and the CIA complex.

The protein belongs to the LTO1 family. As to quaternary structure, forms a complex with YAE1. Interacts with PYCR1 and PYCR2.

The protein resides in the nucleus. In terms of biological role, the complex LTO1:YAE1 functions as a target specific adapter that probably recruits apo-ABCE1 to the cytosolic iron-sulfur protein assembly (CIA) complex machinery. May be required for biogenesis of the large ribosomal subunit and initiation of translation. May play a role in the regulation of proline metabolism and ROS production. This is Protein LTO1 homolog from Mus musculus (Mouse).